The following is a 137-amino-acid chain: MRTLWIMAVLLLGVEGSLVELWKMVFQETGKEAVKNYGLYGCNCGVGKRGKPVDATDRCCFVHRCCYKKVTGCDPKKDRYSYSWENKAIVCGEKNPCLKQVCECDKAVAICLRENLGTYNKNHRVTVKFLCKAPESC.

The signal sequence occupies residues Met-1–Gly-16. Disulfide bonds link Cys-42-Cys-131, Cys-44-Cys-60, Cys-59-Cys-111, Cys-65-Cys-137, Cys-66-Cys-104, Cys-73-Cys-97, and Cys-91-Cys-102. Residue His-63 is part of the active site. Asp-105 is a catalytic residue.

It belongs to the phospholipase A2 family. Group II subfamily. R49 sub-subfamily. Expressed by the venom gland.

Its subcellular location is the secreted. It catalyses the reaction a 1,2-diacyl-sn-glycero-3-phosphocholine + H2O = a 1-acyl-sn-glycero-3-phosphocholine + a fatty acid + H(+). Functionally, snake venom phospholipases A2 that have myotoxic, and edema-inducing activity, as well as extremely weak lipolytic activity. PLA2 catalyzes the calcium-dependent hydrolysis of the 2-acyl groups in 3-sn-phosphoglycerides. The protein is Basic phospholipase A2 PeBP(R)-I/II of Protobothrops elegans (Elegant pitviper).